Here is a 249-residue protein sequence, read N- to C-terminus: Leucyl/phenylalanyl-tRNA--protein transferase (249 aa).

This sequence belongs to the L/F-transferase family.

It localises to the cytoplasm. It catalyses the reaction N-terminal L-lysyl-[protein] + L-leucyl-tRNA(Leu) = N-terminal L-leucyl-L-lysyl-[protein] + tRNA(Leu) + H(+). The catalysed reaction is N-terminal L-arginyl-[protein] + L-leucyl-tRNA(Leu) = N-terminal L-leucyl-L-arginyl-[protein] + tRNA(Leu) + H(+). The enzyme catalyses L-phenylalanyl-tRNA(Phe) + an N-terminal L-alpha-aminoacyl-[protein] = an N-terminal L-phenylalanyl-L-alpha-aminoacyl-[protein] + tRNA(Phe). In terms of biological role, functions in the N-end rule pathway of protein degradation where it conjugates Leu, Phe and, less efficiently, Met from aminoacyl-tRNAs to the N-termini of proteins containing an N-terminal arginine or lysine. In Cupriavidus metallidurans (strain ATCC 43123 / DSM 2839 / NBRC 102507 / CH34) (Ralstonia metallidurans), this protein is Leucyl/phenylalanyl-tRNA--protein transferase.